The chain runs to 86 residues: Large ribosomal subunit protein bL27 (86 aa).

Positions 1–26 (MASKKAGGSTKNGRDSQSKRLGVKRF) are disordered.

The protein belongs to the bacterial ribosomal protein bL27 family.

In Bdellovibrio bacteriovorus (strain ATCC 15356 / DSM 50701 / NCIMB 9529 / HD100), this protein is Large ribosomal subunit protein bL27.